Reading from the N-terminus, the 309-residue chain is tRNA dimethylallyltransferase (309 aa).

An ATP-binding site is contributed by 13-20; the sequence is GPTAVGKS. Position 15–20 (15–20) interacts with substrate; sequence TAVGKS.

The protein belongs to the IPP transferase family. Monomer. Requires Mg(2+) as cofactor.

The enzyme catalyses adenosine(37) in tRNA + dimethylallyl diphosphate = N(6)-dimethylallyladenosine(37) in tRNA + diphosphate. Functionally, catalyzes the transfer of a dimethylallyl group onto the adenine at position 37 in tRNAs that read codons beginning with uridine, leading to the formation of N6-(dimethylallyl)adenosine (i(6)A). The chain is tRNA dimethylallyltransferase from Lacticaseibacillus casei (strain BL23) (Lactobacillus casei).